Consider the following 215-residue polypeptide: 3-dehydroquinate dehydratase (215 aa).

3-dehydroquinate-binding positions include 27-29 (EVR) and R54. H112 serves as the catalytic Proton donor/acceptor. K139 (schiff-base intermediate with substrate) is an active-site residue. Residues R176 and Q198 each contribute to the 3-dehydroquinate site.

The protein belongs to the type-I 3-dehydroquinase family. In terms of assembly, homodimer.

It carries out the reaction 3-dehydroquinate = 3-dehydroshikimate + H2O. It participates in metabolic intermediate biosynthesis; chorismate biosynthesis; chorismate from D-erythrose 4-phosphate and phosphoenolpyruvate: step 3/7. Involved in the third step of the chorismate pathway, which leads to the biosynthesis of aromatic amino acids. Catalyzes the cis-dehydration of 3-dehydroquinate (DHQ) and introduces the first double bond of the aromatic ring to yield 3-dehydroshikimate. The protein is 3-dehydroquinate dehydratase of Thermococcus onnurineus (strain NA1).